The following is a 78-amino-acid chain: RNA-binding protein Hfq (78 aa).

A Sm domain is found at 10–69 (DPFLNTLRKEHVPVSIYLVNGIKLQGQIESFDQYVVLLRNTVTQMVYKHAISTVVPARAV).

This sequence belongs to the Hfq family. Homohexamer.

RNA chaperone that binds small regulatory RNA (sRNAs) and mRNAs to facilitate mRNA translational regulation in response to envelope stress, environmental stress and changes in metabolite concentrations. Also binds with high specificity to tRNAs. This chain is RNA-binding protein Hfq, found in Bordetella avium (strain 197N).